The primary structure comprises 348 residues: Holliday junction branch migration complex subunit RuvB (348 aa).

The interval 4–186 (TDRIISANTV…FGIIQRLEFY (183 aa)) is large ATPase domain (RuvB-L). Residues isoleucine 25, arginine 26, glycine 67, lysine 70, threonine 71, threonine 72, 133–135 (EDY), arginine 176, tyrosine 186, and arginine 223 contribute to the ATP site. Threonine 71 provides a ligand contact to Mg(2+). Residues 187–257 (SVDDLAKIVY…IADKALTMLK (71 aa)) form a small ATPAse domain (RuvB-S) region. Positions 260 to 348 (PVGFDHMDHK…SSDQQQNLSL (89 aa)) are head domain (RuvB-H). The DNA site is built by arginine 315 and arginine 320.

The protein belongs to the RuvB family. Homohexamer. Forms an RuvA(8)-RuvB(12)-Holliday junction (HJ) complex. HJ DNA is sandwiched between 2 RuvA tetramers; dsDNA enters through RuvA and exits via RuvB. An RuvB hexamer assembles on each DNA strand where it exits the tetramer. Each RuvB hexamer is contacted by two RuvA subunits (via domain III) on 2 adjacent RuvB subunits; this complex drives branch migration. In the full resolvosome a probable DNA-RuvA(4)-RuvB(12)-RuvC(2) complex forms which resolves the HJ.

The protein localises to the cytoplasm. The enzyme catalyses ATP + H2O = ADP + phosphate + H(+). Its function is as follows. The RuvA-RuvB-RuvC complex processes Holliday junction (HJ) DNA during genetic recombination and DNA repair, while the RuvA-RuvB complex plays an important role in the rescue of blocked DNA replication forks via replication fork reversal (RFR). RuvA specifically binds to HJ cruciform DNA, conferring on it an open structure. The RuvB hexamer acts as an ATP-dependent pump, pulling dsDNA into and through the RuvAB complex. RuvB forms 2 homohexamers on either side of HJ DNA bound by 1 or 2 RuvA tetramers; 4 subunits per hexamer contact DNA at a time. Coordinated motions by a converter formed by DNA-disengaged RuvB subunits stimulates ATP hydrolysis and nucleotide exchange. Immobilization of the converter enables RuvB to convert the ATP-contained energy into a lever motion, pulling 2 nucleotides of DNA out of the RuvA tetramer per ATP hydrolyzed, thus driving DNA branch migration. The RuvB motors rotate together with the DNA substrate, which together with the progressing nucleotide cycle form the mechanistic basis for DNA recombination by continuous HJ branch migration. Branch migration allows RuvC to scan DNA until it finds its consensus sequence, where it cleaves and resolves cruciform DNA. This Francisella philomiragia subsp. philomiragia (strain ATCC 25017 / CCUG 19701 / FSC 153 / O#319-036) protein is Holliday junction branch migration complex subunit RuvB.